The following is a 488-amino-acid chain: 3-octaprenyl-4-hydroxybenzoate carboxy-lyase (488 aa).

N172 contacts Mn(2+). Prenylated FMN contacts are provided by residues 175–177 (IYR), 189–191 (RWL), and 194–195 (RG). Position 238 (E238) interacts with Mn(2+). D287 functions as the Proton donor in the catalytic mechanism.

It belongs to the UbiD family. In terms of assembly, homohexamer. Prenylated FMN is required as a cofactor. Requires Mn(2+) as cofactor.

The protein localises to the cell membrane. The enzyme catalyses a 4-hydroxy-3-(all-trans-polyprenyl)benzoate + H(+) = a 2-(all-trans-polyprenyl)phenol + CO2. The protein operates within cofactor biosynthesis; ubiquinone biosynthesis. Catalyzes the decarboxylation of 3-octaprenyl-4-hydroxy benzoate to 2-octaprenylphenol, an intermediate step in ubiquinone biosynthesis. In Pseudomonas syringae pv. syringae (strain B728a), this protein is 3-octaprenyl-4-hydroxybenzoate carboxy-lyase.